Reading from the N-terminus, the 314-residue chain is Putative S-adenosyl-L-methionine-dependent methyltransferase MMAR_5323 (314 aa).

S-adenosyl-L-methionine contacts are provided by residues aspartate 132 and 161–162; that span reads DL.

Belongs to the UPF0677 family.

Functionally, exhibits S-adenosyl-L-methionine-dependent methyltransferase activity. The sequence is that of Putative S-adenosyl-L-methionine-dependent methyltransferase MMAR_5323 from Mycobacterium marinum (strain ATCC BAA-535 / M).